A 359-amino-acid chain; its full sequence is DNA replication and repair protein RecF (359 aa).

30–37 is a binding site for ATP; the sequence is GPNGSGKT.

It belongs to the RecF family.

It is found in the cytoplasm. The RecF protein is involved in DNA metabolism; it is required for DNA replication and normal SOS inducibility. RecF binds preferentially to single-stranded, linear DNA. It also seems to bind ATP. The polypeptide is DNA replication and repair protein RecF (Vibrio parahaemolyticus serotype O3:K6 (strain RIMD 2210633)).